Reading from the N-terminus, the 229-residue chain is MMNFSDPCLLGPSACNEDFFEELAREILPTPEAKALAARLLRRLGWHPSEGQCSWCPEAYEYLYDLQFRYTGPVPLVRKHPGSALIVRWMLDGLGHFLFCRPRVQGNPLTYHLSCMGSAIRTLELFREQAHSHLWEQGNLVDCYWSCSSDYGYEGKWGQQAVVRGALSGPWPRPDPPSLQLQCLCAIWRTCLLRGQSQAQKYTNWICARHLQLRPDTSTRDSDLLLQRC.

Interacts with host RELA (via RHD domain), ELOB, ELOC and CUL5; these interactions induce the proteasomal degradation of host RELA.

Its subcellular location is the host cytoplasm. Its function is as follows. Inhibits host NF-kappa-B activation stimulated by IL-1 and multiple PRR viral detection pathways. Targets host NF-kappa-B component RELA/p65 for ubiquitin-dependent proteasomal degradation. This Homo sapiens (Human) protein is Protein MC132 (MC132).